Reading from the N-terminus, the 162-residue chain is Regulator of sigma D (162 aa).

The protein belongs to the Rsd/AlgQ family. As to quaternary structure, interacts with RpoD.

It is found in the cytoplasm. Functionally, binds RpoD and negatively regulates RpoD-mediated transcription activation by preventing the interaction between the primary sigma factor RpoD with the catalytic core of the RNA polymerase and with promoter DNA. May be involved in replacement of the RNA polymerase sigma subunit from RpoD to RpoS during the transition from exponential growth to the stationary phase. In Salmonella typhi, this protein is Regulator of sigma D.